A 441-amino-acid polypeptide reads, in one-letter code: Peroxisomal biogenesis factor 3 (441 aa).

The Peroxisomal portion of the chain corresponds to 1-17 (MAPNQRSRSLLQRHRGK). The chain crosses the membrane as a helical span at residues 18–39 (VLISLTGIAALFTTGSVVVFFV). The Cytoplasmic segment spans residues 40 to 441 (KRWLYKQQLR…GVSSSFSFKP (402 aa)).

This sequence belongs to the peroxin-3 family. In terms of assembly, interacts with MSP1; leading to inhibit the translocase activity of MSP1.

It localises to the peroxisome membrane. In terms of biological role, involved in peroxisome biosynthesis. Acts as a regulator of MSP1 by inhibiting the ability of MSP1 to unfold target proteins. In Saccharomyces cerevisiae (strain ATCC 204508 / S288c) (Baker's yeast), this protein is Peroxisomal biogenesis factor 3 (PEX3).